The primary structure comprises 276 residues: Putative hydro-lyase Xaut_1503 (276 aa).

This sequence belongs to the D-glutamate cyclase family.

In Xanthobacter autotrophicus (strain ATCC BAA-1158 / Py2), this protein is Putative hydro-lyase Xaut_1503.